The following is a 441-amino-acid chain: Ribosomal protein uS12 methylthiotransferase RimO (441 aa).

One can recognise an MTTase N-terminal domain in the interval 8-118; the sequence is PKIGFVSLGC…VLQHVHHYVP (111 aa). 6 residues coordinate [4Fe-4S] cluster: Cys-17, Cys-53, Cys-82, Cys-150, Cys-154, and Cys-157. A Radical SAM core domain is found at 136–373; the sequence is LTPRHYAYLK…MQLQQQISAE (238 aa). A TRAM domain is found at 376-441; sequence QEKVGREILV…DEYDLWGSRV (66 aa).

The protein belongs to the methylthiotransferase family. RimO subfamily. [4Fe-4S] cluster serves as cofactor.

Its subcellular location is the cytoplasm. The enzyme catalyses L-aspartate(89)-[ribosomal protein uS12]-hydrogen + (sulfur carrier)-SH + AH2 + 2 S-adenosyl-L-methionine = 3-methylsulfanyl-L-aspartate(89)-[ribosomal protein uS12]-hydrogen + (sulfur carrier)-H + 5'-deoxyadenosine + L-methionine + A + S-adenosyl-L-homocysteine + 2 H(+). Functionally, catalyzes the methylthiolation of an aspartic acid residue of ribosomal protein uS12. This Salmonella heidelberg (strain SL476) protein is Ribosomal protein uS12 methylthiotransferase RimO.